Consider the following 353-residue polypeptide: Neutral protease 2 homolog AO090001000135 (353 aa).

The first 19 residues, 1–19 (MRFISVSSLLLALAPALNA), serve as a signal peptide directing secretion. Residues 20–176 (VPVEVAGSAQ…TQAVKILERR (157 aa)) constitute a propeptide that is removed on maturation. Disulfide bonds link Cys-182-Cys-254 and Cys-261-Cys-279. Position 304 (His-304) interacts with Zn(2+). Residue Glu-305 is part of the active site. Residues His-308 and Asp-319 each contribute to the Zn(2+) site.

It belongs to the peptidase M35 family. It depends on Zn(2+) as a cofactor.

Its subcellular location is the secreted. It catalyses the reaction Preferential cleavage of bonds with hydrophobic residues in P1'. Also 3-Asn-|-Gln-4 and 8-Gly-|-Ser-9 bonds in insulin B chain.. In terms of biological role, secreted metalloproteinase that allows assimilation of proteinaceous substrates. Shows high activities on basic nuclear substrates such as histone and protamine. The protein is Neutral protease 2 homolog AO090001000135 of Aspergillus oryzae (strain ATCC 42149 / RIB 40) (Yellow koji mold).